Consider the following 206-residue polypeptide: NADH-quinone oxidoreductase subunit C (206 aa).

The protein belongs to the complex I 30 kDa subunit family. NDH-1 is composed of 14 different subunits. Subunits NuoB, C, D, E, F, and G constitute the peripheral sector of the complex.

The protein localises to the cell inner membrane. It catalyses the reaction a quinone + NADH + 5 H(+)(in) = a quinol + NAD(+) + 4 H(+)(out). Its function is as follows. NDH-1 shuttles electrons from NADH, via FMN and iron-sulfur (Fe-S) centers, to quinones in the respiratory chain. The immediate electron acceptor for the enzyme in this species is believed to be ubiquinone. Couples the redox reaction to proton translocation (for every two electrons transferred, four hydrogen ions are translocated across the cytoplasmic membrane), and thus conserves the redox energy in a proton gradient. In Bordetella avium (strain 197N), this protein is NADH-quinone oxidoreductase subunit C.